We begin with the raw amino-acid sequence, 476 residues long: Aspartyl/glutamyl-tRNA(Asn/Gln) amidotransferase subunit B (476 aa).

The protein belongs to the GatB/GatE family. GatB subfamily. Heterotrimer of A, B and C subunits.

The catalysed reaction is L-glutamyl-tRNA(Gln) + L-glutamine + ATP + H2O = L-glutaminyl-tRNA(Gln) + L-glutamate + ADP + phosphate + H(+). It carries out the reaction L-aspartyl-tRNA(Asn) + L-glutamine + ATP + H2O = L-asparaginyl-tRNA(Asn) + L-glutamate + ADP + phosphate + 2 H(+). In terms of biological role, allows the formation of correctly charged Asn-tRNA(Asn) or Gln-tRNA(Gln) through the transamidation of misacylated Asp-tRNA(Asn) or Glu-tRNA(Gln) in organisms which lack either or both of asparaginyl-tRNA or glutaminyl-tRNA synthetases. The reaction takes place in the presence of glutamine and ATP through an activated phospho-Asp-tRNA(Asn) or phospho-Glu-tRNA(Gln). The polypeptide is Aspartyl/glutamyl-tRNA(Asn/Gln) amidotransferase subunit B (Neisseria meningitidis serogroup A / serotype 4A (strain DSM 15465 / Z2491)).